A 53-amino-acid polypeptide reads, in one-letter code: uncharacterized protein (53 aa).

A helical transmembrane segment spans residues 13 to 35 (FLLHSFTFPIAHCPSFSWASFFF).

It is found in the membrane. This is an uncharacterized protein from Saccharomyces cerevisiae (strain ATCC 204508 / S288c) (Baker's yeast).